Consider the following 337-residue polypeptide: Histidine N-acetyltransferase (337 aa).

The propeptide at 1–2 (MK) is removed in mature form. The region spanning 21–157 (LQFSVATEED…GILLMRFRAE (137 aa)) is the N-acetyltransferase domain.

As to expression, expressed exclusively in the brain and lens.

It catalyses the reaction L-histidine + acetyl-CoA = N(alpha)-acetyl-L-histidine + CoA + H(+). Its function is as follows. Enzyme responsible for the N-acetyl-histidine (NAH) synthesis, which is a major constituent of brain and lens of ectothermic vertebrates. The sequence is that of Histidine N-acetyltransferase (hisat) from Oreochromis niloticus (Nile tilapia).